The sequence spans 456 residues: Bifunctional protein GlmU (456 aa).

A pyrophosphorylase region spans residues 1–231; the sequence is MERTCLAIIL…EEELTGCNTR (231 aa). UDP-N-acetyl-alpha-D-glucosamine contacts are provided by residues 10-13, Lys-24, Gln-77, and 82-83; these read LAAG and GT. Asp-107 serves as a coordination point for Mg(2+). UDP-N-acetyl-alpha-D-glucosamine contacts are provided by Gly-143, Glu-157, Asn-172, and Asn-229. Asn-229 serves as a coordination point for Mg(2+). The interval 232-252 is linker; the sequence is AELAYIERLWQQRRRHELMLA. Positions 253–456 are N-acetyltransferase; that stretch reads GVSMVAPETV…LARKIAKAAE (204 aa). Positions 318 and 336 each coordinate UDP-N-acetyl-alpha-D-glucosamine. The active-site Proton acceptor is the His-348. 2 residues coordinate UDP-N-acetyl-alpha-D-glucosamine: Tyr-351 and Asn-362. Acetyl-CoA contacts are provided by residues Ala-365, 371–372, Ser-390, Ser-408, and Arg-425; that span reads NY.

It in the N-terminal section; belongs to the N-acetylglucosamine-1-phosphate uridyltransferase family. In the C-terminal section; belongs to the transferase hexapeptide repeat family. Homotrimer. It depends on Mg(2+) as a cofactor.

It is found in the cytoplasm. It carries out the reaction alpha-D-glucosamine 1-phosphate + acetyl-CoA = N-acetyl-alpha-D-glucosamine 1-phosphate + CoA + H(+). It catalyses the reaction N-acetyl-alpha-D-glucosamine 1-phosphate + UTP + H(+) = UDP-N-acetyl-alpha-D-glucosamine + diphosphate. Its pathway is nucleotide-sugar biosynthesis; UDP-N-acetyl-alpha-D-glucosamine biosynthesis; N-acetyl-alpha-D-glucosamine 1-phosphate from alpha-D-glucosamine 6-phosphate (route II): step 2/2. It functions in the pathway nucleotide-sugar biosynthesis; UDP-N-acetyl-alpha-D-glucosamine biosynthesis; UDP-N-acetyl-alpha-D-glucosamine from N-acetyl-alpha-D-glucosamine 1-phosphate: step 1/1. It participates in bacterial outer membrane biogenesis; LPS lipid A biosynthesis. In terms of biological role, catalyzes the last two sequential reactions in the de novo biosynthetic pathway for UDP-N-acetylglucosamine (UDP-GlcNAc). The C-terminal domain catalyzes the transfer of acetyl group from acetyl coenzyme A to glucosamine-1-phosphate (GlcN-1-P) to produce N-acetylglucosamine-1-phosphate (GlcNAc-1-P), which is converted into UDP-GlcNAc by the transfer of uridine 5-monophosphate (from uridine 5-triphosphate), a reaction catalyzed by the N-terminal domain. The sequence is that of Bifunctional protein GlmU from Sinorhizobium medicae (strain WSM419) (Ensifer medicae).